A 70-amino-acid polypeptide reads, in one-letter code: Large ribosomal subunit protein eL38 (70 aa).

Belongs to the eukaryotic ribosomal protein eL38 family.

This is Large ribosomal subunit protein eL38 (RpL38) from Anopheles gambiae (African malaria mosquito).